Consider the following 264-residue polypeptide: Indole-3-glycerol phosphate synthase (264 aa).

The protein belongs to the TrpC family.

It carries out the reaction 1-(2-carboxyphenylamino)-1-deoxy-D-ribulose 5-phosphate + H(+) = (1S,2R)-1-C-(indol-3-yl)glycerol 3-phosphate + CO2 + H2O. Its pathway is amino-acid biosynthesis; L-tryptophan biosynthesis; L-tryptophan from chorismate: step 4/5. This chain is Indole-3-glycerol phosphate synthase, found in Lactococcus lactis subsp. cremoris (strain MG1363).